A 173-amino-acid chain; its full sequence is Alpha-crystallin A chain (173 aa).

Met-1 is modified (N-acetylmethionine). The required for complex formation with BFSP1 and BFSP2 stretch occupies residues 1-63 (MDVTIQHPWF…RTVLDSGISE (63 aa)). The residue at position 6 (Gln-6) is a Deamidated glutamine; partial. Residue Ser-45 is modified to Phosphoserine. Gln-50 is subject to Deamidated glutamine; partial. One can recognise a sHSP domain in the interval 52 to 162 (LFRTVLDSGI…GHSERAIPVS (111 aa)). An N6-acetyllysine mark is found at Lys-70 and Lys-99. Residue His-100 participates in Zn(2+) binding. Asn-101 carries the post-translational modification Deamidated asparagine; partial. Zn(2+)-binding residues include Glu-102 and His-107. Residue Ser-122 is modified to Phosphoserine. The residue at position 123 (Asn-123) is a Deamidated asparagine; partial. The interval 145 to 173 (KVQSGLDAGHSERAIPVSREEKPSSAPSS) is disordered. Deamidated glutamine; partial is present on Gln-147. The span at 153-167 (GHSERAIPVSREEKP) shows a compositional bias: basic and acidic residues. Residue His-154 coordinates Zn(2+). Residue Ser-162 is glycosylated (O-linked (GlcNAc) serine).

This sequence belongs to the small heat shock protein (HSP20) family. Heteromer composed of three CRYAA and one CRYAB subunits. Inter-subunit bridging via zinc ions enhances stability, which is crucial as there is no protein turn over in the lens. Can also form homodimers and homotetramers (dimers of dimers) which serve as the building blocks of homooligomers. Within homooligomers, the zinc-binding motif is created from residues of 3 different molecules. His-100 and Glu-102 from one molecule are ligands of the zinc ion, and His-107 and His-154 residues from additional molecules complete the site with tetrahedral coordination geometry. Part of a complex required for lens intermediate filament formation composed of BFSP1, BFSP2 and CRYAA. In terms of processing, acetylation at Lys-70 may increase chaperone activity. Post-translationally, undergoes age-dependent proteolytical cleavage at the C-terminus.

It localises to the cytoplasm. Its subcellular location is the nucleus. Contributes to the transparency and refractive index of the lens. Acts as a chaperone, preventing aggregation of various proteins under a wide range of stress conditions. Required for the correct formation of lens intermediate filaments as part of a complex composed of BFSP1, BFSP2 and CRYAA. The polypeptide is Alpha-crystallin A chain (CRYAA) (Meriones unguiculatus (Mongolian jird)).